Here is a 139-residue protein sequence, read N- to C-terminus: Putative pre-16S rRNA nuclease (139 aa).

Belongs to the YqgF nuclease family.

It localises to the cytoplasm. Functionally, could be a nuclease involved in processing of the 5'-end of pre-16S rRNA. In Streptococcus equi subsp. zooepidemicus (strain H70), this protein is Putative pre-16S rRNA nuclease.